Reading from the N-terminus, the 595-residue chain is Torsin-1A-interacting protein 1 (595 aa).

Positions 1–221 are disordered; sequence MAGERWQAEG…GNTKTNEREA (221 aa). The Nuclear portion of the chain corresponds to 1 to 351; that stretch reads MAGERWQAEG…NEPSVKIKWW (351 aa). The span at 24-38 shows a compositional bias: basic and acidic residues; the sequence is PIREGRRRLDPRNGD. The residue at position 60 (Ser60) is a Phosphoserine. 2 stretches are compositionally biased toward basic and acidic residues: residues 70–101 and 115–132; these read FEPRAAKERSPGGRRTPPEKFRPASAGEEVRE and RAQEAEEMKTRRSARLEQ. The span at 133–143 shows a compositional bias: polar residues; sequence HSQQPQLSPAT. Phosphoserine is present on residues Ser134, Ser140, Ser151, Ser153, Ser154, and Ser155. A compositionally biased stretch (polar residues) spans 204-215; the sequence is LDSTYQTNGNTK. Thr235 is subject to Phosphothreonine. 3 positions are modified to phosphoserine: Ser241, Ser244, and Ser255. Disordered stretches follow at residues 250–286 and 319–340; these read ARSSDSLESRDEATPAAGNHPDSLRGLPHNQDFPAHE and IQKSNFGNQSPSTSRPQSAIHH. Residues 251 to 262 show a composition bias toward basic and acidic residues; sequence RSSDSLESRDEA. Over residues 319-335 the composition is skewed to polar residues; sequence IQKSNFGNQSPSTSRPQ. A Glycyl lysine isopeptide (Lys-Gly) (interchain with G-Cter in SUMO2) cross-link involves residue Lys321. At Ser328 the chain carries Phosphoserine. Residues 352–372 traverse the membrane as a helical segment; the sequence is LLGLVAILAVGLFWFFHTPAV. The tract at residues 368-595 is interaction with TOR1A; the sequence is HTPAVETTAV…ENTLKAGSCL (228 aa). A coiled-coil region spans residues 373–400; it reads ETTAVQEFQNQMKQLQSKYQSQNEKLWK. Residues 373-595 are Perinuclear space-facing; that stretch reads ETTAVQEFQN…ENTLKAGSCL (223 aa). Asn411 is a glycosylation site (N-linked (GlcNAc...) asparagine).

This sequence belongs to the TOR1AIP family. As to quaternary structure, interacts with ATP1B4. Interacts with TOR1A (ATP-bound). Interacts with TOR1B, TOR2A and TOR3A. Interacts with VIM. In terms of tissue distribution, expressed in the spinal cord and liver (at protein level).

Its subcellular location is the nucleus inner membrane. In terms of biological role, required for nuclear membrane integrity. Induces TOR1A and TOR1B ATPase activity and is required for their location on the nuclear membrane. Binds to A- and B-type lamins. Possible role in membrane attachment and assembly of the nuclear lamina. In Mus musculus (Mouse), this protein is Torsin-1A-interacting protein 1 (Tor1aip1).